The chain runs to 172 residues: uncharacterized protein (172 aa).

Transmembrane regions (helical) follow at residues 7–27 (ILIS…CYGI), 59–79 (LMIF…LYLF), and 89–109 (FSLT…LFVK).

To M.jannaschii MJ0695.

The protein resides in the cell membrane. This is an uncharacterized protein from Methanocaldococcus jannaschii (strain ATCC 43067 / DSM 2661 / JAL-1 / JCM 10045 / NBRC 100440) (Methanococcus jannaschii).